A 424-amino-acid polypeptide reads, in one-letter code: FeMo cofactor biosynthesis protein NifB (424 aa).

In terms of domain architecture, Radical SAM core spans 12 to 261 (NDSSRHTYGR…PQMKHCARCR (250 aa)). [4Fe-4S] cluster is bound by residues cysteine 30, cysteine 34, and cysteine 37. The S-adenosyl-L-methionine site is built by glycine 84, threonine 136, and valine 188. Residues cysteine 257 and cysteine 260 each coordinate [4Fe-4S] cluster.

The protein belongs to the radical SAM superfamily. NifB family. As to quaternary structure, monomer. [4Fe-4S] cluster is required as a cofactor.

Its pathway is cofactor biosynthesis; Fe-Mo cofactor biosynthesis. In terms of biological role, involved in the biosynthesis of the iron-molybdenum cofactor (FeMo-co or M-cluster) found in the dinitrogenase enzyme of the nitrogenase complex in nitrogen-fixing microorganisms. NifB catalyzes the crucial step of radical SAM-dependent carbide insertion that occurs concomitant with the insertion of a 9th sulfur and the rearrangement/coupling of two [4Fe-4S] clusters into a [8Fe-9S-C] cluster, the precursor to the M-cluster. In Chlorobaculum tepidum (strain ATCC 49652 / DSM 12025 / NBRC 103806 / TLS) (Chlorobium tepidum), this protein is FeMo cofactor biosynthesis protein NifB.